The chain runs to 1498 residues: Mitogen-activated protein kinase kinase kinase nsy-1 (1498 aa).

2 disordered regions span residues 1–35 (MSQN…PTAY) and 190–209 (LQSY…FART). Positions 22–33 (LPLPPRGAPPPT) are enriched in pro residues. The Protein kinase domain maps to 664 to 925 (SNERVVLGKG…AKDLLQDPFI (262 aa)). ATP contacts are provided by residues 670–678 (LGKGTYGTV) and Lys693. Asp790 serves as the catalytic Proton acceptor. A disordered region spans residues 1022–1050 (IDHARNRTFSSSSPVPDGQSSAGTNMSHP). The segment covering 1031 to 1042 (SSSSPVPDGQSS) has biased composition (low complexity). Residues 1276–1314 (SREERVREDRKELRTLQEENEILIERLLQVERELNAQLK) are a coiled coil. Positions 1461–1498 (QPVFLSPMRSRDDSLDDYHSSSADDMYTGAAAETSSGN) are disordered. Over residues 1469–1479 (RSRDDSLDDYH) the composition is skewed to basic and acidic residues.

It belongs to the protein kinase superfamily. STE Ser/Thr protein kinase family. MAP kinase kinase kinase subfamily. In terms of assembly, interacts with unc-43. Interacts with sek-1. It depends on Mg(2+) as a cofactor. May be phosphorylated upon pathogenic bacterial infection. May be regulated by proteasomal degradation mediated by the E3-ubiquitin ligase rle-1. Expressed in intestine, hypodermis, rectal gland cell and neurons including sensory AWC neurons.

The protein localises to the cell projection. It localises to the axon. The protein resides in the perikaryon. It carries out the reaction L-seryl-[protein] + ATP = O-phospho-L-seryl-[protein] + ADP + H(+). It catalyses the reaction L-threonyl-[protein] + ATP = O-phospho-L-threonyl-[protein] + ADP + H(+). Functionally, serine/threonine-protein kinase which, by phosphorylating and activating sek-1, plays an important role in the activation of the p38 pathway also composed of the downstream effectors sek-1 and pmk-1. Downstream of CaMKII unc-43 and adapter protein tir-1, plays a role in determining asymmetric cell fates in olfactory AWC neurons during neuronal development. Activation results in the repression of odorant receptor str-2 expression in one of the 2 AWC neurons. Involved in resistance to pathogenic Gram-positive and Gram-negative bacterial and fungal infection. Involved in resistance to the nematotoxic C.cinerea galectin Cgl2. Probably by activating the sek1/pmk-1/skn-1 pathway, involved in the up-regulation of gcs-1 and glutathione-S-transferase gst-4 expression upon bacterial infection. Probably downstream of tir-1 and nipi-3, required for the expression of antimicrobial peptide nlp-29 in the epidermis in response to fungal infection or physical injury. Plays a role in resistance to several environmental stresses including oxidative, protein misfolding (ER) and osmotic stresses, and DNA-damaging reagents. Plays a role in the stabilization of transcription factor rnt-1 in the intestine during oxidative stress. Involved in germline apoptosis induced by heavy metals, such as Cu(2+). In addition, plays a role in the up-regulation of gcs-1 upon arsenite treatment, most likely through activation of pmk-1, to confer protection against toxicity induced by heavy metals. Plays a role downstream of tir-1 in regulating susceptibility to anoxia. Involved in egg laying. This Caenorhabditis elegans protein is Mitogen-activated protein kinase kinase kinase nsy-1.